The primary structure comprises 250 residues: Probable fimbrial chaperone YfcS (250 aa).

Residues 1–28 (MSDLLCSAKLGAMTLALLLSATSLSALA) form the signal peptide.

It belongs to the periplasmic pilus chaperone family.

Its subcellular location is the periplasm. Part of the yfcOPQRSUV fimbrial operon. Could contribute to adhesion to various surfaces in specific environmental niches. Increases adhesion to eukaryotic T24 bladder epithelial cells in the absence of fim genes. The protein is Probable fimbrial chaperone YfcS (yfcS) of Escherichia coli (strain K12).